The chain runs to 261 residues: 5'-nucleotidase SurE (261 aa).

A divalent metal cation contacts are provided by D8, D9, S43, and N96.

This sequence belongs to the SurE nucleotidase family. A divalent metal cation is required as a cofactor.

It localises to the cytoplasm. It catalyses the reaction a ribonucleoside 5'-phosphate + H2O = a ribonucleoside + phosphate. Functionally, nucleotidase that shows phosphatase activity on nucleoside 5'-monophosphates. The protein is 5'-nucleotidase SurE of Roseobacter denitrificans (strain ATCC 33942 / OCh 114) (Erythrobacter sp. (strain OCh 114)).